Consider the following 1097-residue polypeptide: DNA-directed RNA polymerase subunit beta (1097 aa).

Residues 1072 to 1097 (QDVNPRRSTPSRPTYESLGVADYDED) are disordered.

It belongs to the RNA polymerase beta chain family. In terms of assembly, in cyanobacteria the RNAP catalytic core is composed of 2 alpha, 1 beta, 1 beta', 1 gamma and 1 omega subunit. When a sigma factor is associated with the core the holoenzyme is formed, which can initiate transcription.

The enzyme catalyses RNA(n) + a ribonucleoside 5'-triphosphate = RNA(n+1) + diphosphate. Functionally, DNA-dependent RNA polymerase catalyzes the transcription of DNA into RNA using the four ribonucleoside triphosphates as substrates. This Prochlorococcus marinus (strain MIT 9303) protein is DNA-directed RNA polymerase subunit beta.